The primary structure comprises 130 residues: MANEFNYGTGRRKTATARTRLYAGSGQIVVNGRPFEDYFPRKSLQMIIRQPLVLTKNVERFDIKVNVCGGGVTGQAEAVRHGISRALLELEPELRGALKRAGFLTRDARKKERKKYGQRAARARYQYSKR.

Positions 109–130 are disordered; that stretch reads RKKERKKYGQRAARARYQYSKR.

This sequence belongs to the universal ribosomal protein uS9 family.

The protein is Small ribosomal subunit protein uS9 of Nitratidesulfovibrio vulgaris (strain DSM 19637 / Miyazaki F) (Desulfovibrio vulgaris).